The primary structure comprises 478 residues: MAEAATPKIGSVGRVTQVIGAVVDVAFEGELPKILNALETSNNGNRLVLEVAQHLGENVVRTIAMDSSEGLVRGQEVADTGAPIMVPVGNETLGRIMNVIGEPVDEAGPLVTAHKRAIHQDAPSYVEQSTESQILVTGIKVVDLLAPYARGGKIGLFGGAGVGKTVLIMELINNVAKAHGGYSVFAGVGERTREGNDLYHEMIESNVNKHGGGEGSKAALVYGQMNEPPGARARVALTGLTVAEHFRDQGQDVLFFVDNIFRFTQAGSEVSALLGRIPSAVGYQPTLATDMGQMQERITTTTTGSITSVQAIYVPADDLTDPAPATSFAHLDATTVLSRSIAEKGIYPAVDPLDSTSRMLDPMVVGEEHYEVARKVQSTLQRYKALQDIIAILGMDELSEDDKIAVARARKIERFLSQPFFVAEVFTGSPGKLVALEDTIKGFKGLVNGEYDHLPEAAFYMVGSMEEAVEKAKKLAAA.

158–165 (GGAGVGKT) contributes to the ATP binding site.

Belongs to the ATPase alpha/beta chains family. In terms of assembly, F-type ATPases have 2 components, CF(1) - the catalytic core - and CF(0) - the membrane proton channel. CF(1) has five subunits: alpha(3), beta(3), gamma(1), delta(1), epsilon(1). CF(0) has three main subunits: a(1), b(2) and c(9-12). The alpha and beta chains form an alternating ring which encloses part of the gamma chain. CF(1) is attached to CF(0) by a central stalk formed by the gamma and epsilon chains, while a peripheral stalk is formed by the delta and b chains.

It localises to the cell inner membrane. The enzyme catalyses ATP + H2O + 4 H(+)(in) = ADP + phosphate + 5 H(+)(out). Produces ATP from ADP in the presence of a proton gradient across the membrane. The catalytic sites are hosted primarily by the beta subunits. This is ATP synthase subunit beta from Rhizobium johnstonii (strain DSM 114642 / LMG 32736 / 3841) (Rhizobium leguminosarum bv. viciae).